Here is a 339-residue protein sequence, read N- to C-terminus: 3,4-dihydroxy-2-butanone 4-phosphate synthase (339 aa).

The interval 1 to 206 is DHBP synthase; that stretch reads MKFVSVEQAI…YRLKHESLIK (206 aa). D-ribulose 5-phosphate contacts are provided by residues 27–28, Asp-32, 139–143, and Glu-163; these read RE and RTGHT. Glu-28 is a Mg(2+) binding site. His-142 contacts Mg(2+). The segment at 207-339 is GTP cyclohydrolase II-like; that stretch reads LEEKSQSVLA…GLNLKACNFN (133 aa).

It in the N-terminal section; belongs to the DHBP synthase family. This sequence in the C-terminal section; belongs to the GTP cyclohydrolase II family. Requires Mg(2+) as cofactor. Mn(2+) serves as cofactor.

It catalyses the reaction D-ribulose 5-phosphate = (2S)-2-hydroxy-3-oxobutyl phosphate + formate + H(+). The protein operates within cofactor biosynthesis; riboflavin biosynthesis; 2-hydroxy-3-oxobutyl phosphate from D-ribulose 5-phosphate: step 1/1. In terms of biological role, catalyzes the conversion of D-ribulose 5-phosphate to formate and 3,4-dihydroxy-2-butanone 4-phosphate. The polypeptide is 3,4-dihydroxy-2-butanone 4-phosphate synthase (ribB) (Campylobacter jejuni subsp. jejuni serotype O:2 (strain ATCC 700819 / NCTC 11168)).